The chain runs to 449 residues: Cytochrome P450 monooxygenase iliC (449 aa).

Residues threonine 28–glycine 44 form a helical membrane-spanning segment. Residue cysteine 397 participates in heme binding.

It belongs to the cytochrome P450 family. Requires heme as cofactor.

The protein localises to the membrane. The catalysed reaction is (3E,5S)-3-[(2E,4E,8S,10E,12Z)-1-hydroxy-4,8-dimethyltetradeca-2,4,10,12-tetraen-1-ylidene]-5-[(4-hydroxyphenyl)methyl]pyrrolidine-2,4-dione + reduced [NADPH--hemoprotein reductase] + O2 = 3-[(2E,4E,8S,10E,12Z)-4,8-dimethyltetradeca-2,4,10,12-tetraenoyl]-4-hydroxy-5-(4-hydroxyphenyl)-1,2-dihydropyridin-2-one + oxidized [NADPH--hemoprotein reductase] + 2 H2O. Its pathway is mycotoxin biosynthesis. Cytochrome P450 monooxygenase; part of the gene cluster that mediates the biosynthesis of ilicicolin H, a 4-hydroxy-2-pyridonealkaloid that has potent and broad antifungal activities by inhibiting the mitochondrial respiration chain. IliC catalyzes the ring expansion of the tetramate intermediate to the acyclic 2-pyridone intermediate that contains the trans bis-diene chain. The biosynthesis of ilicicolin H starts with formation of the tetramic acid by the hybrid PKS-NRPS synthetase iliA with the partnering trans-enoyl reductase iliB since iliA lacks a designated enoylreductase (ER) domain. The cytochrome P450 monooxygenase iliC then catalyzes the ring expansion of the tetramate to the acyclic 2-pyridone. The pericyclase iliD further converts the acyclic 2-pyridone into 8-epi-ilicicolin H. 8-epi-ilicicolin H might then spontaneously convert to ilicicolin H since ilicicolin H is produced in the absence of the epimerase iliE, in contrast to what was observed for the Talaromyces variabilis ilicolin H biosynthetic pathway. The polypeptide is Cytochrome P450 monooxygenase iliC (Hypocrea jecorina (strain QM6a) (Trichoderma reesei)).